Here is a 250-residue protein sequence, read N- to C-terminus: 3-deoxy-manno-octulosonate cytidylyltransferase (250 aa).

This sequence belongs to the KdsB family.

It localises to the cytoplasm. It carries out the reaction 3-deoxy-alpha-D-manno-oct-2-ulosonate + CTP = CMP-3-deoxy-beta-D-manno-octulosonate + diphosphate. The protein operates within nucleotide-sugar biosynthesis; CMP-3-deoxy-D-manno-octulosonate biosynthesis; CMP-3-deoxy-D-manno-octulosonate from 3-deoxy-D-manno-octulosonate and CTP: step 1/1. It participates in bacterial outer membrane biogenesis; lipopolysaccharide biosynthesis. In terms of biological role, activates KDO (a required 8-carbon sugar) for incorporation into bacterial lipopolysaccharide in Gram-negative bacteria. This chain is 3-deoxy-manno-octulosonate cytidylyltransferase, found in Xanthomonas campestris pv. campestris (strain 8004).